Reading from the N-terminus, the 611-residue chain is Dehydrogenase pkfF (611 aa).

The signal sequence occupies residues Met1–Ala19. 2 N-linked (GlcNAc...) asparagine glycosylation sites follow: Asn28 and Asn38. Residues Thr50–Ser51, Glu71–Ala72, and His137–Val140 contribute to the FAD site. Residues Asn180, Asn187, Asn240, Asn272, Asn409, and Asn471 are each glycosylated (N-linked (GlcNAc...) asparagine). His547 serves as the catalytic Proton acceptor. FAD is bound by residues Ala581 and Pro592–Gln593.

Belongs to the GMC oxidoreductase family. Requires FAD as cofactor.

Its pathway is secondary metabolite biosynthesis. Its function is as follows. Dehydrogenase; part of the gene cluster that mediates the biosynthesis of aspernidine A, a prenylated isoindolinone. The starting point of the biosynthesis of aspernidin A is the production of orsellinaldehyde by the non-reducing polyketide synthase pkfA. Hydroxylation, methylation of one of the phenol groups, and prenylation, presumably catalyzed by the prenyltransferase pkfE, would be needed to yield aspernidine D. Subsequently, the cytochrome P450 monooxygenase pkfB is responsible for hydroxylation of aspernidine D to yield aspernidine E. The dehydrogenase pkfF may be responsible for further oxidation of aspernidine E to form a dialdehyde intermediate which is further transformed in a series of steps, some of which are enzyme-mediated, to generate aspernidine A. The possibility that additional enzymes outside of the cluster are involved in aspernidine A biosynthesis cannot be excluded. The sequence is that of Dehydrogenase pkfF from Emericella nidulans (strain FGSC A4 / ATCC 38163 / CBS 112.46 / NRRL 194 / M139) (Aspergillus nidulans).